A 255-amino-acid polypeptide reads, in one-letter code: Triosephosphate isomerase (255 aa).

Residue 9–11 (NWK) participates in substrate binding. Histidine 95 acts as the Electrophile in catalysis. Glutamate 167 acts as the Proton acceptor in catalysis. Residues glycine 173, serine 212, and 233–234 (GG) each bind substrate.

The protein belongs to the triosephosphate isomerase family. As to quaternary structure, homodimer.

The protein localises to the cytoplasm. It carries out the reaction D-glyceraldehyde 3-phosphate = dihydroxyacetone phosphate. It participates in carbohydrate biosynthesis; gluconeogenesis. It functions in the pathway carbohydrate degradation; glycolysis; D-glyceraldehyde 3-phosphate from glycerone phosphate: step 1/1. Its function is as follows. Involved in the gluconeogenesis. Catalyzes stereospecifically the conversion of dihydroxyacetone phosphate (DHAP) to D-glyceraldehyde-3-phosphate (G3P). This chain is Triosephosphate isomerase, found in Photorhabdus laumondii subsp. laumondii (strain DSM 15139 / CIP 105565 / TT01) (Photorhabdus luminescens subsp. laumondii).